Here is a 314-residue protein sequence, read N- to C-terminus: Pantothenate kinase (314 aa).

93–100 lines the ATP pocket; sequence GSVAVGKS.

It belongs to the prokaryotic pantothenate kinase family.

Its subcellular location is the cytoplasm. It catalyses the reaction (R)-pantothenate + ATP = (R)-4'-phosphopantothenate + ADP + H(+). The protein operates within cofactor biosynthesis; coenzyme A biosynthesis; CoA from (R)-pantothenate: step 1/5. This chain is Pantothenate kinase, found in Shewanella denitrificans (strain OS217 / ATCC BAA-1090 / DSM 15013).